Here is a 582-residue protein sequence, read N- to C-terminus: DBIRD complex subunit ZNF326 (582 aa).

The segment at 1 to 124 (MDFEDDYTHS…YRNSLDSFGG (124 aa)) is mediates transcriptional activation. Phosphoserine occurs at positions 48, 56, 63, 69, 81, 82, 91, 106, 114, 118, 121, and 137. Lysine 140 is covalently cross-linked (Glycyl lysine isopeptide (Lys-Gly) (interchain with G-Cter in SUMO2)). Positions 154 to 194 (YSSYSSFSSPHMKPAPVGSRGRGTPAYPESTFGSRNYDAFG) are disordered. Arginine 173 bears the Omega-N-methylarginine mark. The residue at position 212 (serine 212) is a Phosphoserine. Position 235 is an omega-N-methylarginine (arginine 235). Positions 238–260 (KRKMMQPFNKPSGTFIKKPKLAK) match the Bipartite nuclear localization signal motif. Lysine 240 is covalently cross-linked (Glycyl lysine isopeptide (Lys-Gly) (interchain with G-Cter in SUMO2)). The disordered stretch occupies residues 243–302 (QPFNKPSGTFIKKPKLAKPMEKISLSKSPTKTDPKNEEEEKRRIEARREKQRRRREKNSE). N6-acetyllysine; alternate is present on lysine 247. Lysine 247 is covalently cross-linked (Glycyl lysine isopeptide (Lys-Gly) (interchain with G-Cter in SUMO2); alternate). Serine 249 is modified (phosphoserine). Threonine 251 is subject to Phosphothreonine. Residues lysine 254 and lysine 264 each participate in a glycyl lysine isopeptide (Lys-Gly) (interchain with G-Cter in SUMO2) cross-link. At serine 270 the chain carries Phosphoserine. Basic and acidic residues predominate over residues 272–290 (TKTDPKNEEEEKRRIEARR). The C2H2 AKAP95-type 1 zinc finger occupies 314-336 (CSFCKFRTFEEKDIELHLESSSH). A Glycyl lysine isopeptide (Lys-Gly) (interchain with G-Cter in SUMO2) cross-link involves residue lysine 401. The C2H2 AKAP95-type 2 zinc-finger motif lies at 407-430 (CSACSVYIPALHSSVQQHLKSPDH). Glycyl lysine isopeptide (Lys-Gly) (interchain with G-Cter in SUMO2) cross-links involve residues lysine 459 and lysine 467. The segment at 472–582 (FEIQDHSQDQ…DFPVEQPEEN (111 aa)) is disordered. A compositionally biased stretch (acidic residues) spans 483-523 (IEGDEEDEEKIDEPIEEEEDEDEEEEAEEVGEVEEVEEVEE). Gly residues predominate over residues 530-545 (EGEGNIQGVGEGGEVG). The segment covering 552–567 (GVGEVEEVEELEEETA) has biased composition (acidic residues).

The protein belongs to the AKAP95 family. In terms of assembly, component of the DBIRD complex. Interacts with CCAR2; the interaction is direct.

The protein localises to the nucleus matrix. In terms of biological role, core component of the DBIRD complex, a multiprotein complex that acts at the interface between core mRNP particles and RNA polymerase II (RNAPII) and integrates transcript elongation with the regulation of alternative splicing: the DBIRD complex affects local transcript elongation rates and alternative splicing of a large set of exons embedded in (A + T)-rich DNA regions. May play a role in neuronal differentiation and is able to bind DNA and activate expression in vitro. In Homo sapiens (Human), this protein is DBIRD complex subunit ZNF326 (ZNF326).